A 527-amino-acid chain; its full sequence is Glucose-6-phosphate isomerase (527 aa).

Glutamate 323 (proton donor) is an active-site residue. Residues histidine 352 and lysine 454 contribute to the active site.

It belongs to the GPI family.

Its subcellular location is the cytoplasm. It catalyses the reaction alpha-D-glucose 6-phosphate = beta-D-fructose 6-phosphate. It functions in the pathway carbohydrate biosynthesis; gluconeogenesis. The protein operates within carbohydrate degradation; glycolysis; D-glyceraldehyde 3-phosphate and glycerone phosphate from D-glucose: step 2/4. Catalyzes the reversible isomerization of glucose-6-phosphate to fructose-6-phosphate. The chain is Glucose-6-phosphate isomerase from Prochlorococcus marinus (strain MIT 9301).